Reading from the N-terminus, the 177-residue chain is Protein C (177 aa).

Polar residues predominate over residues methionine 1–arginine 10. The tract at residues methionine 1–arginine 37 is disordered.

This sequence belongs to the morbillivirus protein C family.

This is Protein C (P/V/C) from Bos indicus (Zebu).